A 403-amino-acid polypeptide reads, in one-letter code: S-adenosylmethionine:tRNA ribosyltransferase-isomerase (403 aa).

The protein belongs to the QueA family. Monomer.

Its subcellular location is the cytoplasm. The catalysed reaction is 7-aminomethyl-7-carbaguanosine(34) in tRNA + S-adenosyl-L-methionine = epoxyqueuosine(34) in tRNA + adenine + L-methionine + 2 H(+). Its pathway is tRNA modification; tRNA-queuosine biosynthesis. In terms of biological role, transfers and isomerizes the ribose moiety from AdoMet to the 7-aminomethyl group of 7-deazaguanine (preQ1-tRNA) to give epoxyqueuosine (oQ-tRNA). In Psychrobacter arcticus (strain DSM 17307 / VKM B-2377 / 273-4), this protein is S-adenosylmethionine:tRNA ribosyltransferase-isomerase.